A 205-amino-acid chain; its full sequence is SREBP regulating gene protein (205 aa).

The Cytoplasmic portion of the chain corresponds to 1–16 (MVNLAAMVWRRLLRKR). Residues 17–35 (WVLALVFGLSLVYFLSSTF) traverse the membrane as a helical segment. Over 36–205 (KQEERAVRDR…GESPPELFPA (170 aa)) the chain is Lumenal. The N-linked (GlcNAc...) asparagine glycan is linked to N67.

Belongs to the SPRING family. As to quaternary structure, interacts with SCAP.

It localises to the golgi apparatus membrane. In terms of biological role, positively regulates hepatic SREBP signaling pathway by modulating the proper localization of SCAP (SREBP cleavage-activating protein) to the endoplasmic reticulum, thereby controlling the level of functional SCAP. The protein is SREBP regulating gene protein of Homo sapiens (Human).